The following is a 138-amino-acid chain: Succinate dehydrogenase assembly factor 4, mitochondrial (138 aa).

Residues 1–32 (MLCAIKSTGYRYPRTGALNLLRGRPFNMATRK) constitute a mitochondrion transit peptide. The span at 71–98 (QATGDRTKESLNSPLLTKNDIGSFSPEF) shows a compositional bias: polar residues. Residues 71-138 (QATGDRTKES…YSFNGRVTDF (68 aa)) form a disordered region.

The protein belongs to the SDHAF4 family. In terms of assembly, interacts with SDH1 in its FAD-bound form.

It localises to the mitochondrion matrix. Plays an essential role in the assembly of succinate dehydrogenase (SDH), an enzyme complex (also referred to as respiratory complex II) that is a component of both the tricarboxylic acid (TCA) cycle and the mitochondrial electron transport chain, and which couples the oxidation of succinate to fumarate with the reduction of ubiquinone (coenzyme Q) to ubiquinol. Binds to the flavoprotein subunit SDH1 in its FAD-bound form, blocking the generation of excess reactive oxygen species (ROS) and facilitating its assembly with the iron-sulfur protein subunit SDH2 into the SDH catalytic dimer. The polypeptide is Succinate dehydrogenase assembly factor 4, mitochondrial (Saccharomyces cerevisiae (strain ATCC 204508 / S288c) (Baker's yeast)).